The sequence spans 62 residues: Large ribosomal subunit protein uL30 (62 aa).

Belongs to the universal ribosomal protein uL30 family. As to quaternary structure, part of the 50S ribosomal subunit.

The polypeptide is Large ribosomal subunit protein uL30 (Heliobacterium modesticaldum (strain ATCC 51547 / Ice1)).